Here is a 1036-residue protein sequence, read N- to C-terminus: Multidrug resistance protein MdtC (1036 aa).

10 consecutive transmembrane segments (helical) span residues valine 12 to valine 34, arginine 336 to leucine 353, leucine 360 to phenylalanine 382, valine 431 to leucine 450, phenylalanine 463 to methionine 485, tryptophan 528 to isoleucine 547, leucine 853 to isoleucine 875, leucine 895 to valine 917, leucine 949 to serine 971, and isoleucine 986 to phenylalanine 1008.

This sequence belongs to the resistance-nodulation-cell division (RND) (TC 2.A.6) family. MdtC subfamily. As to quaternary structure, part of a tripartite efflux system composed of MdtA, MdtB and MdtC. MdtC forms a heteromultimer with MdtB.

It is found in the cell inner membrane. The chain is Multidrug resistance protein MdtC from Photorhabdus laumondii subsp. laumondii (strain DSM 15139 / CIP 105565 / TT01) (Photorhabdus luminescens subsp. laumondii).